Here is a 359-residue protein sequence, read N- to C-terminus: MPSKLAISSMSLGRCFAGHSLDSKLDAAQRYGYLGIELFYEDLVDVAEHLSNERPSPEGPFVEAQIAAARHILQMCQARGLEVVCLQPFMHYDGLNDRAEHERRLEKLALWIELAHELHTDIIQIPANFLPANQVSDNLDLIVSDLCKVADIGAQALPPIRFAYESLCWSTRVDLWERCWDIVQRVDRPNFGICLDTFNILGRIYADPTSPSGRTPNAKEAVRKSIANLVSRVDVSKVFYVQVVDAERLSKPLLPGHPYYNPEQPARMSWSRNCRLFYGETEYGAYLPVKEVARALFHGIGFEGWVSLELFNRRMSEEGPEVPEELAMRGAISWAKLVQDLRIPVEGPLVTMPRVSASL.

The protein belongs to the bacterial two-domain DSD family. As to quaternary structure, monomer.

The catalysed reaction is 3-dehydroshikimate = 3,4-dihydroxybenzoate + H2O. It participates in aromatic compound metabolism; 3,4-dihydroxybenzoate biosynthesis; 3,4-dihydroxybenzoate from 3-dehydroquinate: step 2/2. Its activity is regulated as follows. Divalent cations such as Mg(2+), but also MO(2+), Mn(2+), Ba(2+), and Co(2+) activate the enzyme, whereas monovalent cations as K(+), Na(+), and NH4(+) decrease its activity slightly. 3-dehydroshikimate dehydratase; part of the qa gene cluster that mediates the catabolism of quinic acid (QA) and as such, allows the use of QA as a sole carbon source. Catalyzes the third reaction in the inducible quinic acid catabolic pathway by converting dehydroshikimate to protocatechuate. The qa cluster encodes 3 inducible enymes (qa-2, qa-3 and qa-4) catalyzing the first three reactions in the catabolism of quinic acid to protocatechuic acid (also known as 3,4-Dihydroxybenzoic acid). This chain is 3-dehydroshikimate dehydratase, found in Neurospora crassa (strain ATCC 24698 / 74-OR23-1A / CBS 708.71 / DSM 1257 / FGSC 987).